Here is a 517-residue protein sequence, read N- to C-terminus: GMP synthase [glutamine-hydrolyzing] (517 aa).

In terms of domain architecture, Glutamine amidotransferase type-1 spans 9–199 (RILILDFGSQ…VLGVCGCERL (191 aa)). Catalysis depends on Cys86, which acts as the Nucleophile. Catalysis depends on residues His173 and Glu175. Residues 200–392 (WTSESIIEDA…LGLPYEMLYR (193 aa)) form the GMPS ATP-PPase domain. Position 227–233 (227–233 (SGGVDSS)) interacts with ATP.

As to quaternary structure, homodimer.

The catalysed reaction is XMP + L-glutamine + ATP + H2O = GMP + L-glutamate + AMP + diphosphate + 2 H(+). The protein operates within purine metabolism; GMP biosynthesis; GMP from XMP (L-Gln route): step 1/1. Functionally, catalyzes the synthesis of GMP from XMP. The sequence is that of GMP synthase [glutamine-hydrolyzing] from Vibrio vulnificus (strain YJ016).